Reading from the N-terminus, the 120-residue chain is Cytochrome c6 (120 aa).

Positions 1 to 35 (MFKLFNQASRIFFGIALPCLIFLGGIFSLGNTALA) are cleaved as a signal peptide. Positions 49, 52, 53, and 93 each coordinate heme c.

It belongs to the cytochrome c family. PetJ subfamily. As to quaternary structure, monomer. Binds 1 heme c group covalently per subunit.

The protein resides in the cellular thylakoid lumen. Functionally, functions as an electron carrier between membrane-bound cytochrome b6-f and photosystem I in oxygenic photosynthesis. This Synechocystis sp. (strain ATCC 27184 / PCC 6803 / Kazusa) protein is Cytochrome c6 (petJ).